Here is a 217-residue protein sequence, read N- to C-terminus: Adenylate kinase (217 aa).

Position 10–15 (10–15 (GAGKGT)) interacts with ATP. The segment at 30–59 (STGDMFRAAIKEGTELGLQAKSFMDQGALV) is NMP. Residues threonine 31, arginine 36, 57–59 (ALV), 85–88 (GFPR), and glutamine 92 each bind AMP. Residues 126 to 163 (GRRICKTCGASYHLIFNPPAEEGKCDKDGGELYTRADD) are LID. Arginine 127 lines the ATP pocket. Positions 130 and 133 each coordinate Zn(2+). 136–137 (SY) contacts ATP. Zn(2+) is bound by residues cysteine 150 and aspartate 153. AMP is bound by residues arginine 160 and arginine 171. Position 199 (glutamine 199) interacts with ATP.

This sequence belongs to the adenylate kinase family. Monomer.

It localises to the cytoplasm. The catalysed reaction is AMP + ATP = 2 ADP. It participates in purine metabolism; AMP biosynthesis via salvage pathway; AMP from ADP: step 1/1. Its function is as follows. Catalyzes the reversible transfer of the terminal phosphate group between ATP and AMP. Plays an important role in cellular energy homeostasis and in adenine nucleotide metabolism. This is Adenylate kinase from Lysinibacillus sphaericus (strain C3-41).